A 281-amino-acid chain; its full sequence is Ribosomal RNA large subunit methyltransferase J (281 aa).

S-adenosyl-L-methionine-binding positions include H19, H42, S101, E119, 144-145, and D165; that span reads NG. The Proton acceptor role is filled by D165.

It belongs to the RlmJ family. As to quaternary structure, monomer.

The catalysed reaction is adenosine(2030) in 23S rRNA + S-adenosyl-L-methionine = N(6)-methyladenosine(2030) in 23S rRNA + S-adenosyl-L-homocysteine + H(+). In terms of biological role, specifically methylates the adenine in position 2030 of 23S rRNA. The chain is Ribosomal RNA large subunit methyltransferase J from Haemophilus influenzae (strain ATCC 51907 / DSM 11121 / KW20 / Rd).